The primary structure comprises 154 residues: Large ribosomal subunit protein uL15 (154 aa).

The tract at residues 1 to 57 is disordered; that stretch reads MRFQDLHPQAGSRRRKRRIGRGIAAGQGASGGFGMRGQKSRSGRPTRPGFEGGQNPL. Residues 23–35 are compositionally biased toward gly residues; it reads IAAGQGASGGFGM.

This sequence belongs to the universal ribosomal protein uL15 family. Part of the 50S ribosomal subunit.

Binds to the 23S rRNA. This chain is Large ribosomal subunit protein uL15, found in Thermosynechococcus vestitus (strain NIES-2133 / IAM M-273 / BP-1).